A 193-amino-acid chain; its full sequence is Potassium-transporting ATPase KdpC subunit (193 aa).

Residues 7–27 (PLVVLFVVLTAVTGLAYPAVM) traverse the membrane as a helical segment.

It belongs to the KdpC family. In terms of assembly, the system is composed of three essential subunits: KdpA, KdpB and KdpC.

It localises to the cell inner membrane. Part of the high-affinity ATP-driven potassium transport (or Kdp) system, which catalyzes the hydrolysis of ATP coupled with the electrogenic transport of potassium into the cytoplasm. This subunit acts as a catalytic chaperone that increases the ATP-binding affinity of the ATP-hydrolyzing subunit KdpB by the formation of a transient KdpB/KdpC/ATP ternary complex. This Burkholderia orbicola (strain MC0-3) protein is Potassium-transporting ATPase KdpC subunit.